We begin with the raw amino-acid sequence, 57 residues long: SALTGAGGTHLCGSHLVEALYVVCGDRGFFYTPSKTGIVEQCCHRKCSIYDMENYCN.

3 disulfides stabilise this stretch: Cys-12–Cys-43, Cys-24–Cys-56, and Cys-42–Cys-47.

This sequence belongs to the insulin family. In terms of assembly, heterodimer of a B chain and an A chain linked by two disulfide bonds.

Its subcellular location is the secreted. Insulin decreases blood glucose concentration. It increases cell permeability to monosaccharides, amino acids and fatty acids. It accelerates glycolysis, the pentose phosphate cycle, and glycogen synthesis in liver. This chain is Insulin (ins), found in Lampetra fluviatilis (European river lamprey).